We begin with the raw amino-acid sequence, 104 residues long: Large ribosomal subunit protein uL24 (104 aa).

This sequence belongs to the universal ribosomal protein uL24 family. Part of the 50S ribosomal subunit.

Functionally, one of two assembly initiator proteins, it binds directly to the 5'-end of the 23S rRNA, where it nucleates assembly of the 50S subunit. Its function is as follows. One of the proteins that surrounds the polypeptide exit tunnel on the outside of the subunit. This chain is Large ribosomal subunit protein uL24, found in Idiomarina loihiensis (strain ATCC BAA-735 / DSM 15497 / L2-TR).